Reading from the N-terminus, the 241-residue chain is ATP synthase subunit a (241 aa).

The next 8 membrane-spanning stretches (helical) occupy residues Asn29–Ile49, Val54–Ile74, Ile86–Pro106, His114–Phe134, Trp153–Leu173, Leu177–Asn197, Ile200–Val220, and Ala221–Lys241.

Belongs to the ATPase A chain family. F-type ATPases have 2 components, CF(1) - the catalytic core - and CF(0) - the membrane proton channel. CF(1) has five subunits: alpha(3), beta(3), gamma(1), delta(1), epsilon(1). CF(0) has three main subunits: a(1), b(2) and c(9-12). The alpha and beta chains form an alternating ring which encloses part of the gamma chain. CF(1) is attached to CF(0) by a central stalk formed by the gamma and epsilon chains, while a peripheral stalk is formed by the delta and b chains.

The protein resides in the cell inner membrane. Key component of the proton channel; it plays a direct role in the translocation of protons across the membrane. The sequence is that of ATP synthase subunit a from Wolbachia sp. subsp. Drosophila simulans (strain wRi).